A 359-amino-acid chain; its full sequence is Magnesium transporter NIPA2 (359 aa).

Residues 1–9 (MSLGRGKYD) lie on the Extracellular side of the membrane. Residues 10-30 (FYIGLGLAMTSSIFIGGSFIL) traverse the membrane as a helical segment. Topologically, residues 31–56 (KKKGLLRLARKGSMRAGQGGHAYLKE) are cytoplasmic. Residues 57–77 (WLWWAGLLSMGAGEVANFAAY) form a helical membrane-spanning segment. Residue A78 is a topological domain, extracellular. Residues 79 to 99 (FAPATLVTPLGALSVLVSAIL) form a helical membrane-spanning segment. Over 100–107 (SSYFLNER) the chain is Cytoplasmic. The chain crosses the membrane as a helical span at residues 108–128 (LNLHGKIGCLLSILGSTVMVI). The Extracellular segment spans residues 129–149 (HAPKEEEIETLNEMSHKLGDP). Residues 150–170 (GFVVFATFVVIVALIFIFVVG) form a helical membrane-spanning segment. Over 171–175 (PRHGQ) the chain is Cytoplasmic. Residues 176–196 (TNILVYITICSVIGAFSVSCV) traverse the membrane as a helical segment. Residues 197–215 (KGLGIAIKELLAGKPVLQH) lie on the Extracellular side of the membrane. A helical membrane pass occupies residues 216 to 236 (PLAWILLFSLVVCVSTQINYL). At 237-246 (NRALDIFNTS) the chain is on the cytoplasmic side. A helical membrane pass occupies residues 247 to 267 (IVTPIYYVFFTTSVLTCSAIL). Residues 268–278 (FKEWQDMPVDD) are Extracellular-facing. A helical transmembrane segment spans residues 279–299 (VIGTLSGFFTIIVGIFLLHAF). Residues 300–359 (KDVSFSLASLPVSFRKDEKAMNGNLSSMYEVLNNNEDDLPCGIEHTGENISRRNGNLPSF) are Cytoplasmic-facing.

Belongs to the NIPA family. Widely expressed. Expressed at high levels in the kidney.

It localises to the cell membrane. It is found in the early endosome. It catalyses the reaction Mg(2+)(in) = Mg(2+)(out). Its function is as follows. Acts as a selective Mg(2+) transporter. The chain is Magnesium transporter NIPA2 (Nipa2) from Mus musculus (Mouse).